Here is a 179-residue protein sequence, read N- to C-terminus: MSRIGKQPIPVPAGVDITIDGQNVLVKGPKGTLDLTVAEPIMLARNDEGAIVVTRPDNERRNRSLHGLSRTLVSNLVTGVTQGYTVSMEIFGVGYRAQLKGSNLEFALGYSHPVVIEAPEGITFAVQSPTKFTITGIDKQKVGQISANIRRLRRPDPYKGKGVRYEGEQIRRKVGKTGK.

It belongs to the universal ribosomal protein uL6 family. In terms of assembly, part of the 50S ribosomal subunit.

In terms of biological role, this protein binds to the 23S rRNA, and is important in its secondary structure. It is located near the subunit interface in the base of the L7/L12 stalk, and near the tRNA binding site of the peptidyltransferase center. The polypeptide is Large ribosomal subunit protein uL6 (Mycobacterium leprae (strain Br4923)).